A 288-amino-acid polypeptide reads, in one-letter code: Homoserine kinase (288 aa).

79-89 contributes to the ATP binding site; the sequence is PLARGLGSSSS.

The protein belongs to the GHMP kinase family. Homoserine kinase subfamily.

Its subcellular location is the cytoplasm. It catalyses the reaction L-homoserine + ATP = O-phospho-L-homoserine + ADP + H(+). It functions in the pathway amino-acid biosynthesis; L-threonine biosynthesis; L-threonine from L-aspartate: step 4/5. Its function is as follows. Catalyzes the ATP-dependent phosphorylation of L-homoserine to L-homoserine phosphate. The polypeptide is Homoserine kinase (Streptococcus gordonii (strain Challis / ATCC 35105 / BCRC 15272 / CH1 / DL1 / V288)).